The following is a 215-amino-acid chain: High mobility group protein B1 (215 aa).

The HMG box 1 DNA-binding region spans 9–79 (PRGKMSSYAF…RYEKEMKNYV (71 aa)). Cysteine sulfonic acid (-SO3H); alternate is present on Cys-23. Residues Cys-23 and Cys-45 are joined by a disulfide bond. The segment at 27 to 43 (HKKKHPDASVNFSEFSK) is NLS 1. The Nuclear localization signal (NLS) 1 motif lies at 27–43 (HKKKHPDASVNFSEFSK). The residue at position 45 (Cys-45) is a Cysteine sulfonic acid (-SO3H); alternate. Positions 75-95 (MKNYVPPKGETKKKFKDPNAP) are disordered. Positions 83 to 94 (GETKKKFKDPNA) are enriched in basic and acidic residues. The HMG box 2 DNA-binding region spans 95 to 163 (PKRPPSAFFL…KYEKDIAAYR (69 aa)). Cysteine sulfonic acid (-SO3H) is present on Cys-106. The segment covering 166–179 (GKVDAGKKVVAKAE) has biased composition (basic and acidic residues). A disordered region spans residues 166–215 (GKVDAGKKVVAKAEKSKKKKEEEEDEDEDEEDEEDEEEEEEEEEDDDDDE). Positions 178–184 (AEKSKKK) are NLS 2. The Nuclear localization signal (NLS) 2 motif lies at 178-184 (AEKSKKK). Residues 187–215 (EEEDEDEDEEDEEDEEEEEEEEEDDDDDE) are compositionally biased toward acidic residues. Residues 196-210 (EDEEDEEEEEEEEED) form an involved in intramolecular interaction with K-3 region. Residues 211–215 (DDDDE) form an involved in interaction with histone H3 region.

The protein belongs to the HMGB family. Reduction/oxidation of cysteine residues Cys-23, Cys-45 and Cys-106 and a possible intramolecular disulfide bond involving Cys-23 and Cys-45 give rise to different redox forms with specific functional activities: 1- fully reduced HMGB1 (HMGB1C23hC45hC106h), 2- disulfide HMGB1 (HMGB1C23-C45C106h) and 3- sulfonyl HMGB1 (HMGB1C23soC45soC106so).

The protein resides in the nucleus. The protein localises to the chromosome. Its subcellular location is the cytoplasm. It localises to the secreted. Its function is as follows. Multifunctional redox sensitive protein with various roles in different cellular compartments. Nuclear functions are attributed to fully reduced HGMB1. Associates with chromatin and binds DNA with a preference to non-canonical DNA structures such as single-stranded DNA, DNA-containing cruciforms or bent structures, supercoiled DNA and ZDNA. Can bent DNA and enhance DNA flexibility by looping thus providing a mechanism to promote activities on various gene promoters. Can restructure the canonical nucleosome. Proposed to be an universal biosensor for nucleic acids. May promote inflammatory response to sterile and infectious signals and may be involved in the coordination and integration of innate and adaptive immune responses. In the cytoplasm may function as sensor and/or chaperone for immunogenic nucleic acids, and mediate autophagy. May act as danger associated molecular pattern (DAMP) molecule that amplifies immune responses during tissue injury. The polypeptide is High mobility group protein B1 (HMGB1) (Gallus gallus (Chicken)).